The sequence spans 843 residues: Lon protease (843 aa).

The span at 1-16 shows a compositional bias: basic and acidic residues; the sequence is MRERKETAMSDKEKKG. Residues 1–22 are disordered; the sequence is MRERKETAMSDKEKKGAGAGAQ. One can recognise a Lon N-terminal domain in the interval 42–236; the sequence is LPILPLRNSV…LVLELLNRKR (195 aa). 388-395 is a binding site for ATP; sequence GPPGVGKT. A Lon proteolytic domain is found at 627-808; sequence TEIAGVATGL…DEVLQAALEE (182 aa). Active-site residues include Ser-714 and Lys-757. Positions 805 to 843 are disordered; sequence ALEENPVGRKPPAAPEPEGEKKPGATPTPPAKKPDEIRV.

Belongs to the peptidase S16 family. In terms of assembly, homohexamer. Organized in a ring with a central cavity.

It is found in the cytoplasm. The enzyme catalyses Hydrolysis of proteins in presence of ATP.. Its function is as follows. ATP-dependent serine protease that mediates the selective degradation of mutant and abnormal proteins as well as certain short-lived regulatory proteins. Required for cellular homeostasis and for survival from DNA damage and developmental changes induced by stress. Degrades polypeptides processively to yield small peptide fragments that are 5 to 10 amino acids long. Binds to DNA in a double-stranded, site-specific manner. The protein is Lon protease of Anaeromyxobacter dehalogenans (strain 2CP-C).